The primary structure comprises 53 residues: Rho GTPase-activating protein 6 (53 aa).

It is found in the cytoplasm. Its function is as follows. GTPase activator for the Rho-type GTPases by converting them to an inactive GDP-bound state. Could regulate the interactions of signaling molecules with the actin cytoskeleton. Promotes continuous elongation of cytoplasmic processes during cell motility and simultaneous retraction of the cell body changing the cell morphology. This chain is Rho GTPase-activating protein 6 (arhgap6), found in Takifugu rubripes (Japanese pufferfish).